Here is a 212-residue protein sequence, read N- to C-terminus: Riboflavin synthase (212 aa).

Lumazine-binding repeat units lie at residues 1 to 97 and 98 to 195; these read MFTG…VGGH and LVSG…VDSV. 2,4-dihydroxypteridine contacts are provided by residues 4–6, 48–50, 62–67, 101–103, K137, 146–148, and 160–165; these read GIV, CLT, DIVEET, GHI, SLT, and FLIPET.

As to quaternary structure, homotrimer.

It catalyses the reaction 2 6,7-dimethyl-8-(1-D-ribityl)lumazine + H(+) = 5-amino-6-(D-ribitylamino)uracil + riboflavin. It functions in the pathway cofactor biosynthesis; riboflavin biosynthesis; riboflavin from 2-hydroxy-3-oxobutyl phosphate and 5-amino-6-(D-ribitylamino)uracil: step 2/2. Functionally, catalyzes the dismutation of two molecules of 6,7-dimethyl-8-ribityllumazine, resulting in the formation of riboflavin and 5-amino-6-(D-ribitylamino)uracil. This is Riboflavin synthase (ribE) from Buchnera aphidicola subsp. Baizongia pistaciae (strain Bp).